We begin with the raw amino-acid sequence, 62 residues long: Small ribosomal subunit protein eS27 (62 aa).

Zn(2+) contacts are provided by Cys17, Cys20, Cys36, and Cys39. The C4-type zinc finger occupies 17–39; the sequence is CPECNNEQIVFGSPATVVKCLTC.

This sequence belongs to the eukaryotic ribosomal protein eS27 family. Part of the 30S ribosomal subunit. Zn(2+) serves as cofactor.

The protein is Small ribosomal subunit protein eS27 of Methanocaldococcus jannaschii (strain ATCC 43067 / DSM 2661 / JAL-1 / JCM 10045 / NBRC 100440) (Methanococcus jannaschii).